Reading from the N-terminus, the 318-residue chain is O-glucosyltransferase LpsA (318 aa).

This sequence belongs to the glycosyltransferase 90 family.

It functions in the pathway protein modification; protein glycosylation. Its function is as follows. Involved in lipopolysaccharide core biosynthesis. The sequence is that of O-glucosyltransferase LpsA (lpsA) from Dichelobacter nodosus (Bacteroides nodosus).